The following is a 258-amino-acid chain: MLIVLSPAKSLDYKTPIKVKAPTLPEFASESAKLIAELKKLAPQDVAKLMSLSDQLAVLNVGRYRDWSKKFTVDNSKPAIYAFDGDVYDGFDVKSLNTKAIDFAQDHVRILSGLYGVLRPLDLMQAYRLEMGTSLKNIRGKDLYAFWGGRVTDSLKALLGKQKKPVLLNLASEEYFKVLQPKELDCPVIAPIFQDAKDGKYKIISFYAKRARGLMARYVVENRITDPEDLKGFNLDGYKYFAAESKIDKPVFRRAERK.

The protein belongs to the UPF0246 family.

This is UPF0246 protein Pnuc_0753 from Polynucleobacter asymbioticus (strain DSM 18221 / CIP 109841 / QLW-P1DMWA-1) (Polynucleobacter necessarius subsp. asymbioticus).